Here is an 85-residue protein sequence, read N- to C-terminus: Defensin-like protein 76 (85 aa).

The N-terminal stretch at 1 to 27 (MQNQKHSHILTAITIVLLFAMAAKINA) is a signal peptide. Disulfide bonds link C35-C70, C40-C59, C44-C68, and C48-C69.

It belongs to the DEFL family.

The protein localises to the secreted. In Arabidopsis thaliana (Mouse-ear cress), this protein is Defensin-like protein 76 (LCR86).